Here is a 470-residue protein sequence, read N- to C-terminus: Negative regulator of sexual conjugation and meiosis (470 aa).

The region spanning 18-295 is the Protein kinase domain; that stretch reads LRFVSIIGAG…ITLPELSTLV (278 aa). ATP is bound by residues 24–32 and Lys-47; that span reads IGAGAYGVV. Asp-143 functions as the Proton acceptor in the catalytic mechanism. The residue at position 469 (Ser-469) is a Phosphoserine.

This sequence belongs to the protein kinase superfamily. Ser/Thr protein kinase family.

It catalyses the reaction L-seryl-[protein] + ATP = O-phospho-L-seryl-[protein] + ADP + H(+). The catalysed reaction is L-threonyl-[protein] + ATP = O-phospho-L-threonyl-[protein] + ADP + H(+). This protein is a negative regulator of both sexual conjugation and meiosis. It phosphorylates mei2. It blocks the onset of meiosis until conjugation takes place. This is Negative regulator of sexual conjugation and meiosis (ran1) from Schizosaccharomyces pombe (strain 972 / ATCC 24843) (Fission yeast).